The primary structure comprises 350 residues: Ion-translocating oxidoreductase complex subunit D (350 aa).

A run of 3 helical transmembrane segments spans residues 36 to 56, 89 to 109, and 124 to 144; these read CYFF…IAVA, IPAL…ILVV, and AMAA…TWVA. FMN phosphoryl threonine is present on Thr185. The next 5 membrane-spanning stretches (helical) occupy residues 212–232, 239–259, 265–285, 298–318, and 319–339; these read GFGI…LVML, WQIS…GYLL, MGPL…FIAT, LIFG…CGYP, and DAFA…DYYV.

This sequence belongs to the NqrB/RnfD family. As to quaternary structure, the complex is composed of six subunits: RnfA, RnfB, RnfC, RnfD, RnfE and RnfG. FMN is required as a cofactor.

It localises to the cell inner membrane. Functionally, part of a membrane-bound complex that couples electron transfer with translocation of ions across the membrane. In Shewanella loihica (strain ATCC BAA-1088 / PV-4), this protein is Ion-translocating oxidoreductase complex subunit D.